Reading from the N-terminus, the 492-residue chain is Glutamyl-tRNA(Gln) amidotransferase subunit A (492 aa).

Active-site charge relay system residues include Lys78 and Ser158. The active-site Acyl-ester intermediate is the Ser182.

Belongs to the amidase family. GatA subfamily. Heterotrimer of A, B and C subunits.

The catalysed reaction is L-glutamyl-tRNA(Gln) + L-glutamine + ATP + H2O = L-glutaminyl-tRNA(Gln) + L-glutamate + ADP + phosphate + H(+). In terms of biological role, allows the formation of correctly charged Gln-tRNA(Gln) through the transamidation of misacylated Glu-tRNA(Gln) in organisms which lack glutaminyl-tRNA synthetase. The reaction takes place in the presence of glutamine and ATP through an activated gamma-phospho-Glu-tRNA(Gln). In Orientia tsutsugamushi (strain Boryong) (Rickettsia tsutsugamushi), this protein is Glutamyl-tRNA(Gln) amidotransferase subunit A.